A 178-amino-acid chain; its full sequence is Adenine phosphoribosyltransferase (178 aa).

Belongs to the purine/pyrimidine phosphoribosyltransferase family. Homodimer.

It is found in the cytoplasm. It catalyses the reaction AMP + diphosphate = 5-phospho-alpha-D-ribose 1-diphosphate + adenine. Its pathway is purine metabolism; AMP biosynthesis via salvage pathway; AMP from adenine: step 1/1. Functionally, catalyzes a salvage reaction resulting in the formation of AMP, that is energically less costly than de novo synthesis. This Mycoplasmoides gallisepticum (strain R(low / passage 15 / clone 2)) (Mycoplasma gallisepticum) protein is Adenine phosphoribosyltransferase.